Reading from the N-terminus, the 417-residue chain is N-acetylmuramoyl-L-alanine amidase AmiC (417 aa).

The tat-type signal signal peptide spans 1-31; that stretch reads MSGSNTAISRRRLLQGAGAMWLLSVSQVSLA. The interval 166–185 is disordered; it reads LEKQVPPAQSGPQPGKAGRD. The MurNAc-LAA domain occupies 190–404; it reads IMLDPGHGGE…VAESILAGIK (215 aa).

It belongs to the N-acetylmuramoyl-L-alanine amidase 3 family. Predicted to be exported by the Tat system. The position of the signal peptide cleavage has not been experimentally proven.

It localises to the periplasm. It carries out the reaction Hydrolyzes the link between N-acetylmuramoyl residues and L-amino acid residues in certain cell-wall glycopeptides.. Its function is as follows. Cell-wall hydrolase involved in septum cleavage during cell division. This chain is N-acetylmuramoyl-L-alanine amidase AmiC (amiC), found in Escherichia coli O6:H1 (strain CFT073 / ATCC 700928 / UPEC).